The primary structure comprises 841 residues: uncharacterized protein (841 aa).

A signal peptide spans 1–31 (MKIERYFKAIARAFIITFLFSLILQDNGVLA).

The protein resides in the secreted. This is an uncharacterized protein from Schizosaccharomyces pombe (strain 972 / ATCC 24843) (Fission yeast).